The sequence spans 124 residues: Small ribosomal subunit protein uS12 (124 aa).

The disordered stretch occupies residues 8-30 (IRSARQDTEKQTKSPALKSCPQR). The residue at position 89 (D89) is a 3-methylthioaspartic acid. The disordered stretch occupies residues 103-124 (DTAGVKDRKQSRSKYGAKKPKA). The segment covering 113–124 (SRSKYGAKKPKA) has biased composition (basic residues).

The protein belongs to the universal ribosomal protein uS12 family. As to quaternary structure, part of the 30S ribosomal subunit. Contacts proteins S8 and S17. May interact with IF1 in the 30S initiation complex.

Functionally, with S4 and S5 plays an important role in translational accuracy. Its function is as follows. Interacts with and stabilizes bases of the 16S rRNA that are involved in tRNA selection in the A site and with the mRNA backbone. Located at the interface of the 30S and 50S subunits, it traverses the body of the 30S subunit contacting proteins on the other side and probably holding the rRNA structure together. The combined cluster of proteins S8, S12 and S17 appears to hold together the shoulder and platform of the 30S subunit. This is Small ribosomal subunit protein uS12 from Trichodesmium erythraeum (strain IMS101).